We begin with the raw amino-acid sequence, 313 residues long: Aspartate carbamoyltransferase catalytic subunit (313 aa).

Carbamoyl phosphate is bound by residues Arg51 and Thr52. Residue Lys80 participates in L-aspartate binding. Positions 101, 129, and 132 each coordinate carbamoyl phosphate. L-aspartate contacts are provided by Arg162 and Arg224. 2 residues coordinate carbamoyl phosphate: Leu263 and Pro264.

It belongs to the aspartate/ornithine carbamoyltransferase superfamily. ATCase family. Heterododecamer (2C3:3R2) of six catalytic PyrB chains organized as two trimers (C3), and six regulatory PyrI chains organized as three dimers (R2).

The catalysed reaction is carbamoyl phosphate + L-aspartate = N-carbamoyl-L-aspartate + phosphate + H(+). It participates in pyrimidine metabolism; UMP biosynthesis via de novo pathway; (S)-dihydroorotate from bicarbonate: step 2/3. Its function is as follows. Catalyzes the condensation of carbamoyl phosphate and aspartate to form carbamoyl aspartate and inorganic phosphate, the committed step in the de novo pyrimidine nucleotide biosynthesis pathway. This Bacteroides thetaiotaomicron (strain ATCC 29148 / DSM 2079 / JCM 5827 / CCUG 10774 / NCTC 10582 / VPI-5482 / E50) protein is Aspartate carbamoyltransferase catalytic subunit.